A 553-amino-acid chain; its full sequence is uncharacterized protein (553 aa).

A run of 5 helical transmembrane segments spans residues 13–30, 37–59, 69–91, 98–120, and 157–179; these read ALQA…GLGL, GISL…GLSI, SFGL…FSSF, LNML…SYTT, and TPAL…AVLL. 2 consecutive RCK C-terminal domains span residues 190 to 273 and 281 to 365; these read LEVQ…LFGE and KEDI…VLGN. 6 consecutive transmembrane segments (helical) span residues 375–397, 402–424, 436–458, 468–490, 497–514, and 529–551; these read LVAV…SIPG, VRLG…GPRL, LMLR…GAHF, LLWI…FFAF, FGSV…PMAL, and AYAT…LLMF.

Belongs to the AAE transporter (TC 2.A.81) family.

Its subcellular location is the cell membrane. This is an uncharacterized protein from Bacteroides fragilis (strain YCH46).